Consider the following 216-residue polypeptide: Cytidylate kinase (216 aa).

Residue glycine 7–threonine 15 coordinates ATP.

This sequence belongs to the cytidylate kinase family. Type 1 subfamily.

It localises to the cytoplasm. The enzyme catalyses CMP + ATP = CDP + ADP. The catalysed reaction is dCMP + ATP = dCDP + ADP. The protein is Cytidylate kinase of Chlamydia trachomatis serovar L2 (strain ATCC VR-902B / DSM 19102 / 434/Bu).